Here is a 590-residue protein sequence, read N- to C-terminus: Beta-fructofuranosidase, insoluble isoenzyme CWINV2 (590 aa).

A signal peptide spans 1 to 25 (MSAPKFGYVLLLIVLINISNNGVDA). Residues 59–62 (WIND), glutamine 78, and tryptophan 86 each bind substrate. The active site involves aspartate 62. N-linked (GlcNAc...) asparagine glycosylation is present at asparagine 118. 121–122 (WS) is a binding site for substrate. Residues asparagine 143 and asparagine 180 are each glycosylated (N-linked (GlcNAc...) asparagine). Substrate-binding positions include 185–186 (RD), glutamate 241, and aspartate 275. A glycan (N-linked (GlcNAc...) asparagine) is linked at asparagine 335. Cysteines 435 and 483 form a disulfide. Asparagine 564 carries an N-linked (GlcNAc...) asparagine glycan.

Belongs to the glycosyl hydrolase 32 family. In terms of tissue distribution, expressed in flowers, and seeds.

The protein localises to the secreted. It is found in the extracellular space. The protein resides in the apoplast. Its subcellular location is the cell wall. The catalysed reaction is Hydrolysis of terminal non-reducing beta-D-fructofuranoside residues in beta-D-fructofuranosides.. The polypeptide is Beta-fructofuranosidase, insoluble isoenzyme CWINV2 (CWINV2) (Arabidopsis thaliana (Mouse-ear cress)).